The chain runs to 815 residues: Minichromosome loss protein 1 (815 aa).

WD repeat units lie at residues Ala-11–Ser-50, Asn-53–Leu-90, Arg-93–Ser-132, Pro-135–Phe-174, and Glu-228–Glu-267. Residues Leu-306–Gly-362 form a disordered region. Polar residues predominate over residues Ser-340–Asn-352. A WD 6 repeat occupies Glu-517–His-553.

Interacts with pof3 and pol1.

The protein localises to the nucleus. The protein resides in the chromosome. In terms of biological role, has a role in regulating DNA replication complexes. Acts as a regulator of post DNA replication initiation. Associates with chromatin during G1 and S phases of mitosis. Required for the transcriptional repression of the outer repeats of the centromeric region. Acts as a polymerase alpha replication accessory factor and is important for S-phase DNA damage survival. Plays a role in lagging-strand synthesis and Ozaki fragment processing, in addition to DNA repair. The chain is Minichromosome loss protein 1 (mcl1) from Schizosaccharomyces pombe (strain 972 / ATCC 24843) (Fission yeast).